The primary structure comprises 378 residues: Trans-enoyl reductase poxP (378 aa).

An NADP(+)-binding site is contributed by 62-65 (CDWK). Position 151-158 (151-158 (SVFATLWI)) interacts with substrate. Residues 187–190 (STST), 210–213 (SPHN), Tyr-228, and 275–276 (LE) each bind NADP(+). 295–299 (GLAAS) contacts substrate. NADP(+) is bound at residue 364 to 365 (TS).

The protein belongs to the zinc-containing alcohol dehydrogenase family. In terms of assembly, monomer.

It participates in secondary metabolite biosynthesis. Functionally, trans-enoyl reductase; part of the gene cluster that mediates the biosynthesis of oxaleimides, cytotoxic compounds containing an unusual disubstituted succinimide moiety. The first step of the pathway is provided by the HR-PKS poxF that serves in a new mode of collaborative biosynthesis with the PKS-NRPS poxE, by providing the olefin containing amino acid substrate via the synthesis of an ACP-bound dec-4-enoate. The cytochrome P450 monooxygenase poxM-catalyzed oxidation at the alpha-position creates the enzyme-bound 2-hydroxydec-4-enoyl-ACP thioester, which may be prone to spontaneous hydrolysis to yield 2-hydroxydec-4-enoic acid due to increased electrophilicity of the carbonyl. 2-hydroxydec-4-enoic acid can then be further oxidized by poxM to yield the alpha-ketoacid 2-oxodec-4-enoicacid, which is reductively aminated by the aminotransferase poxL to yield (S,E)-2-aminodec-4-enoic acid. The Hybrid PKS-NRPS synthetase poxE then performs condensation between the octaketide product of its PKS modules and the amino group of (S,E)-2-aminodec-4-enoic acid which is activated and incorporated by the adenylation domain. The resulting aminoacyl product can be cyclized by the Diels-Alderase PoxQ and reductively released by the reductive (R) domain of poxE to yield an aldehyde intermediate. The released aldehyde is then substrate for a Knoevenagel condensation by the hydrolyase poxO followed by an oxidation at the 5-position of the pyrrolidone ring. The presence of the olefin from the amino acid building block allows for migration of the substituted allyl group to occur. This allylic transposition reaction takes place in a conjugate addition, semipinacol-like fashion to yield a succinimide intermediate. Iterative two-electron oxidations of the C7 methyl of the succinimide intermediate to the carboxylic acid can be catalyzed by one of two remaining cytochrome P450 monooxygenasess poxC or poxD to yield oxaleimide A. Subsequent oxidation yields the maleimide scaffold oxaleimide I. Both oxaleimide A and oxaleimide I can undergo oxidative modifications in the decalin ring to yield the series of products oxaleimides B to H. The chain is Trans-enoyl reductase poxP from Penicillium oxalicum.